The primary structure comprises 415 residues: Histidine--tRNA ligase (415 aa).

The protein belongs to the class-II aminoacyl-tRNA synthetase family. As to quaternary structure, homodimer.

It is found in the cytoplasm. It carries out the reaction tRNA(His) + L-histidine + ATP = L-histidyl-tRNA(His) + AMP + diphosphate + H(+). The polypeptide is Histidine--tRNA ligase (Clostridium perfringens (strain SM101 / Type A)).